Consider the following 37-residue polypeptide: Large ribosomal subunit protein bL36 (37 aa).

The protein belongs to the bacterial ribosomal protein bL36 family.

The chain is Large ribosomal subunit protein bL36 from Desulforamulus reducens (strain ATCC BAA-1160 / DSM 100696 / MI-1) (Desulfotomaculum reducens).